The following is a 264-amino-acid chain: 3'-5' ssDNA/RNA exonuclease TatD (264 aa).

A divalent metal cation is bound by residues E92, H128, and H153.

The protein belongs to the metallo-dependent hydrolases superfamily. TatD-type hydrolase family. TatD subfamily. As to quaternary structure, monomer. Mg(2+) serves as cofactor.

The protein resides in the cytoplasm. 3'-5' exonuclease that prefers single-stranded DNA and RNA. May play a role in the H(2)O(2)-induced DNA damage repair. The protein is 3'-5' ssDNA/RNA exonuclease TatD of Musicola paradisiaca (strain Ech703) (Dickeya paradisiaca).